A 384-amino-acid polypeptide reads, in one-letter code: Multidrug/solvent efflux pump periplasmic linker protein MepA (384 aa).

The first 22 residues, 1 to 22 (MQFKPAVTALVSAVALATLLSG), serve as a signal peptide directing secretion. The N-palmitoyl cysteine moiety is linked to residue Cys23. Cys23 carries S-diacylglycerol cysteine lipidation. Residues 115-155 (LAERYKQLIDEQAVSKQEYDDANAKRLQAEASLKSAQIDLR) are a coiled coil. The interval 362 to 384 (ATNVKKPAGPDQANAAKADAKAE) is disordered. The segment covering 368–378 (PAGPDQANAAK) has biased composition (low complexity).

It belongs to the membrane fusion protein (MFP) (TC 8.A.1) family.

It is found in the cell inner membrane. Functionally, the periplasmic linker protein component of an organic solvent and antibiotic efflux pump; confers resistance to toluene, hexane, p-xylene, ampicillin, penicillin G, erythromycin, novobiocin and tetracycline. The polypeptide is Multidrug/solvent efflux pump periplasmic linker protein MepA (mepA) (Pseudomonas putida (Arthrobacter siderocapsulatus)).